Here is a 617-residue protein sequence, read N- to C-terminus: Electron transfer flavoprotein-ubiquinone oxidoreductase, mitochondrial (617 aa).

A mitochondrion-targeting transit peptide spans 1 to 33 (MLVPLAKLSCLAYQCFHALKIKKNYLPLCATRW). 71-85 (VVIVGAGPAGLSAAV) is an FAD binding site. At K96 the chain carries N6-acetyllysine. An intramembrane segment occupies 109-130 (IGAHTLSGACLDPGAFKELFPD). K132 and K223 each carry N6-acetyllysine. Residues G305 and G306 each contribute to the a ubiquinone site. At K357 the chain carries N6-acetyllysine. An intramembrane segment occupies 428–447 (IGLHVTEYEDNLKNSWVWKE). A Phosphoserine modification is found at S551. Residues C561, C586, C589, and C592 each contribute to the [4Fe-4S] cluster site. One can recognise a 4Fe-4S ferredoxin-type domain in the interval 577–606 (FRLQINAQNCVHCKTCDIKDPSQNINWVVP).

Belongs to the ETF-QO/FixC family. In terms of assembly, monomer. [4Fe-4S] cluster serves as cofactor. The cofactor is FAD.

The protein resides in the mitochondrion inner membrane. It catalyses the reaction a ubiquinone + reduced [electron-transfer flavoprotein] = a ubiquinol + oxidized [electron-transfer flavoprotein] + H(+). Its function is as follows. Accepts electrons from ETF and reduces ubiquinone. The chain is Electron transfer flavoprotein-ubiquinone oxidoreductase, mitochondrial from Homo sapiens (Human).